A 491-amino-acid polypeptide reads, in one-letter code: uncharacterized protein (491 aa).

Substrate is bound at residue Trp99. Asn137 is a binding site for Ca(2+). His138 provides a ligand contact to substrate. The Ca(2+) site is built by Glu177 and Asp190. Arg219 serves as a coordination point for substrate. 3 residues coordinate Ca(2+): Asp221, His225, and Glu245. The Nucleophile role is filled by Asp221. Residue 224 to 225 (KH) participates in substrate binding. The active-site Proton donor is the Glu245. Substrate is bound by residues Gly249, His312, and Arg360.

Belongs to the glycosyl hydrolase 13 family. The cofactor is Ca(2+).

The protein resides in the cytoplasm. Its subcellular location is the nucleus. This is an uncharacterized protein from Schizosaccharomyces pombe (strain 972 / ATCC 24843) (Fission yeast).